Reading from the N-terminus, the 56-residue chain is Prokaryotic ubiquitin-like protein UBact (56 aa).

Residues 1–56 (MPERIVKPMPQDPVTKPGDEGPRTPNVPKPDTERLLERMRRVDPRQAQRYRQRSGE) form a disordered region. Residues 30–46 (PDTERLLERMRRVDPRQ) are compositionally biased toward basic and acidic residues. Glu-56 participates in a covalent cross-link: Isoglutamyl lysine isopeptide (Glu-Lys) (interchain with K-? in acceptor proteins).

Belongs to the ubiquitin-like protein UBact family.

Its function is as follows. May function as a protein modifier covalently attached to lysine residues of substrate proteins. This may serve to target the modified proteins for degradation by proteasomes. The chain is Prokaryotic ubiquitin-like protein UBact from Acetithermum autotrophicum.